Here is a 615-residue protein sequence, read N- to C-terminus: Putative DNA ligase 205R (615 aa).

The active-site N6-AMP-lysine intermediate is the Lys-101.

This sequence belongs to the NAD-dependent DNA ligase family.

It catalyses the reaction NAD(+) + (deoxyribonucleotide)n-3'-hydroxyl + 5'-phospho-(deoxyribonucleotide)m = (deoxyribonucleotide)n+m + AMP + beta-nicotinamide D-nucleotide.. Catalyzes the formation of phosphodiester linkages between 5'-phosphoryl and 3'-hydroxyl groups in double-stranded DNA using NAD as a coenzyme and as the energy source for the reaction. The protein is Putative DNA ligase 205R of Invertebrate iridescent virus 6 (IIV-6).